Reading from the N-terminus, the 283-residue chain is Nucleotide-binding protein Hore_15880 (283 aa).

An ATP-binding site is contributed by 8 to 15 (GMSGAGKS). 57-60 (DIRG) contacts GTP.

The protein belongs to the RapZ-like family.

In terms of biological role, displays ATPase and GTPase activities. In Halothermothrix orenii (strain H 168 / OCM 544 / DSM 9562), this protein is Nucleotide-binding protein Hore_15880.